The following is a 473-amino-acid chain: Sulfate adenylyltransferase subunit 1 (473 aa).

Residues 19–238 form the tr-type G domain; that stretch reads KTLLKFLTCG…IKIKNSISSE (220 aa). Positions 28 to 35 are G1; sequence GSVDDGKS. 28 to 35 lines the GTP pocket; that stretch reads GSVDDGKS. Positions 86 to 90 are G2; it reads GITID. The G3 stretch occupies residues 107–110; that stretch reads DTPG. GTP is bound by residues 107-111 and 162-165; these read DTPGH and NKMD. The G4 stretch occupies residues 162–165; it reads NKMD. Residues 200 to 202 form a G5 region; that stretch reads SAL.

This sequence belongs to the TRAFAC class translation factor GTPase superfamily. Classic translation factor GTPase family. CysN/NodQ subfamily. As to quaternary structure, heterodimer composed of CysD, the smaller subunit, and CysN.

The enzyme catalyses sulfate + ATP + H(+) = adenosine 5'-phosphosulfate + diphosphate. It participates in sulfur metabolism; hydrogen sulfide biosynthesis; sulfite from sulfate: step 1/3. Functionally, with CysD forms the ATP sulfurylase (ATPS) that catalyzes the adenylation of sulfate producing adenosine 5'-phosphosulfate (APS) and diphosphate, the first enzymatic step in sulfur assimilation pathway. APS synthesis involves the formation of a high-energy phosphoric-sulfuric acid anhydride bond driven by GTP hydrolysis by CysN coupled to ATP hydrolysis by CysD. This is Sulfate adenylyltransferase subunit 1 from Buchnera aphidicola subsp. Acyrthosiphon pisum (strain Tuc7).